A 430-amino-acid polypeptide reads, in one-letter code: MANLWKKQRLRDTGLCRLGILFAVTLSIVLMLVSVPRTALNGSSIDDDLDGLDKDLEAKLNASLLSVARGNRMSLRLHRRNHFSPRNTDLFPDLAKDRVVIVLYVHNRAQYFRVTVESLSKVKGISETLLIVSHDGYFEEMNRIVESIKFCQVKQIFSPYSPHIYRTSFPGVTLNDCKNKGDEAKGHCEGNPDQYGNHRSPKIVSLKHHWWWMMNTVWDGLEETKGHEGHILFIEEDHFLFPNAYRNIQTLTRLKPAKCPDCFAANLAPSDVKSRGEGLESLVAERMGNVGYSFNRSVWENIHQKAREFCFFDDYNWDITMWATVFPSFGSPVYTLRGPRTSAVHFGKCGLHQGRGDEGDCIDNGVVNIEVKETDKVVNIKEGWGVRVYKHQAGYKAGFEGWGGWGDDRDRHLCLDFATMYRYSSSSASP.

Residues 1–12 (MANLWKKQRLRD) lie on the Cytoplasmic side of the membrane. Residues 13–35 (TGLCRLGILFAVTLSIVLMLVSV) form a helical; Signal-anchor for type II membrane protein membrane-spanning segment. Residues 36–430 (PRTALNGSSI…YRYSSSSASP (395 aa)) are Lumenal-facing. 2 N-linked (GlcNAc...) asparagine glycosylation sites follow: Asn-41 and Asn-61. Substrate-binding positions include 104 to 108 (YVHNR) and Asp-135. Cysteines 177 and 188 form a disulfide. 205-209 (SLKHH) is a binding site for substrate. Asp-237 contributes to the Mn(2+) binding site. Cys-259 and Cys-262 are joined by a disulfide. Asn-295 is a glycosylation site (N-linked (GlcNAc...) asparagine). A disulfide bridge links Cys-310 with Cys-414. His-345 provides a ligand contact to Mn(2+).

The protein belongs to the glycosyltransferase 16 (GT16) protein family. It depends on Mn(2+) as a cofactor.

The protein localises to the golgi apparatus membrane. The enzyme catalyses an N(4)-{beta-D-GlcNAc-(1-&gt;2)-alpha-D-Man-(1-&gt;3)-[alpha-D-Man-(1-&gt;6)]-beta-D-Man-(1-&gt;4)-beta-D-GlcNAc-(1-&gt;4)-beta-D-GlcNAc}-L-asparaginyl-[protein] + UDP-N-acetyl-alpha-D-glucosamine = N(4)-{beta-D-GlcNAc-(1-&gt;2)-alpha-D-Man-(1-&gt;3)-[beta-D-GlcNAc-(1-&gt;2)-alpha-D-Man-(1-&gt;6)]-beta-D-Man-(1-&gt;4)-beta-D-GlcNAc-(1-&gt;4)-beta-D-GlcNAc}-L-asparaginyl-[protein] + UDP + H(+). The protein operates within protein modification; protein glycosylation. In terms of biological role, catalyzes an essential step in the conversion of oligo-mannose and hybrid to complex N-glycans. This chain is Alpha-1,6-mannosyl-glycoprotein 2-beta-N-acetylglucosaminyltransferase, found in Arabidopsis thaliana (Mouse-ear cress).